The sequence spans 699 residues: Elongation factor G (699 aa).

In terms of domain architecture, tr-type G spans 8-288; it reads EDYRNFGIMA…AVCEYLPSPL (281 aa). GTP is bound by residues 17-24, 86-90, and 140-143; these read AHIDAGKT, DTPGH, and NKMD.

This sequence belongs to the TRAFAC class translation factor GTPase superfamily. Classic translation factor GTPase family. EF-G/EF-2 subfamily.

The protein resides in the cytoplasm. Its function is as follows. Catalyzes the GTP-dependent ribosomal translocation step during translation elongation. During this step, the ribosome changes from the pre-translocational (PRE) to the post-translocational (POST) state as the newly formed A-site-bound peptidyl-tRNA and P-site-bound deacylated tRNA move to the P and E sites, respectively. Catalyzes the coordinated movement of the two tRNA molecules, the mRNA and conformational changes in the ribosome. This chain is Elongation factor G, found in Allorhizobium ampelinum (strain ATCC BAA-846 / DSM 112012 / S4) (Agrobacterium vitis (strain S4)).